The following is a 615-amino-acid chain: 1-deoxy-D-xylulose-5-phosphate synthase (615 aa).

Thiamine diphosphate contacts are provided by residues His-72 and 113-115 (GHA). Asp-144 contacts Mg(2+). Thiamine diphosphate contacts are provided by residues 145–146 (GA), Asn-173, Tyr-281, and Glu-360. Position 173 (Asn-173) interacts with Mg(2+).

It belongs to the transketolase family. DXPS subfamily. Homodimer. The cofactor is Mg(2+). It depends on thiamine diphosphate as a cofactor.

The enzyme catalyses D-glyceraldehyde 3-phosphate + pyruvate + H(+) = 1-deoxy-D-xylulose 5-phosphate + CO2. It functions in the pathway metabolic intermediate biosynthesis; 1-deoxy-D-xylulose 5-phosphate biosynthesis; 1-deoxy-D-xylulose 5-phosphate from D-glyceraldehyde 3-phosphate and pyruvate: step 1/1. Catalyzes the acyloin condensation reaction between C atoms 2 and 3 of pyruvate and glyceraldehyde 3-phosphate to yield 1-deoxy-D-xylulose-5-phosphate (DXP). This is 1-deoxy-D-xylulose-5-phosphate synthase from Thermus thermophilus (strain ATCC BAA-163 / DSM 7039 / HB27).